We begin with the raw amino-acid sequence, 737 residues long: Phosphoribosylformylglycinamidine synthase subunit PurL (737 aa).

Residue histidine 50 is part of the active site. The ATP site is built by tyrosine 53 and lysine 92. Glutamate 94 is a binding site for Mg(2+). Substrate contacts are provided by residues 95–98 (SHNH) and arginine 117. Histidine 96 serves as the catalytic Proton acceptor. Residue aspartate 118 participates in Mg(2+) binding. A substrate-binding site is contributed by glutamine 241. Aspartate 269 contacts Mg(2+). Position 313–315 (313–315 (ESQ)) interacts with substrate. Aspartate 494 and glycine 531 together coordinate ATP. Residue asparagine 532 coordinates Mg(2+). Serine 534 provides a ligand contact to substrate.

This sequence belongs to the FGAMS family. Monomer. Part of the FGAM synthase complex composed of 1 PurL, 1 PurQ and 2 PurS subunits.

It is found in the cytoplasm. It carries out the reaction N(2)-formyl-N(1)-(5-phospho-beta-D-ribosyl)glycinamide + L-glutamine + ATP + H2O = 2-formamido-N(1)-(5-O-phospho-beta-D-ribosyl)acetamidine + L-glutamate + ADP + phosphate + H(+). The protein operates within purine metabolism; IMP biosynthesis via de novo pathway; 5-amino-1-(5-phospho-D-ribosyl)imidazole from N(2)-formyl-N(1)-(5-phospho-D-ribosyl)glycinamide: step 1/2. Functionally, part of the phosphoribosylformylglycinamidine synthase complex involved in the purines biosynthetic pathway. Catalyzes the ATP-dependent conversion of formylglycinamide ribonucleotide (FGAR) and glutamine to yield formylglycinamidine ribonucleotide (FGAM) and glutamate. The FGAM synthase complex is composed of three subunits. PurQ produces an ammonia molecule by converting glutamine to glutamate. PurL transfers the ammonia molecule to FGAR to form FGAM in an ATP-dependent manner. PurS interacts with PurQ and PurL and is thought to assist in the transfer of the ammonia molecule from PurQ to PurL. The sequence is that of Phosphoribosylformylglycinamidine synthase subunit PurL from Nitrobacter winogradskyi (strain ATCC 25391 / DSM 10237 / CIP 104748 / NCIMB 11846 / Nb-255).